The primary structure comprises 691 residues: DNA ligase (691 aa).

Residues 41–45 (DAEYD), 90–91 (SL), and Glu-130 each bind NAD(+). The active-site N6-AMP-lysine intermediate is the Lys-132. NAD(+) is bound by residues Arg-153, Glu-190, Lys-307, and Lys-331. Positions 425, 428, 443, and 449 each coordinate Zn(2+). In terms of domain architecture, BRCT spans 610–691 (APQGVLAGKT…LHQLLEGNTP (82 aa)).

It belongs to the NAD-dependent DNA ligase family. LigA subfamily. Mg(2+) is required as a cofactor. Mn(2+) serves as cofactor.

It catalyses the reaction NAD(+) + (deoxyribonucleotide)n-3'-hydroxyl + 5'-phospho-(deoxyribonucleotide)m = (deoxyribonucleotide)n+m + AMP + beta-nicotinamide D-nucleotide.. DNA ligase that catalyzes the formation of phosphodiester linkages between 5'-phosphoryl and 3'-hydroxyl groups in double-stranded DNA using NAD as a coenzyme and as the energy source for the reaction. It is essential for DNA replication and repair of damaged DNA. The sequence is that of DNA ligase from Burkholderia lata (strain ATCC 17760 / DSM 23089 / LMG 22485 / NCIMB 9086 / R18194 / 383).